The sequence spans 723 residues: Fatty acid oxidation complex subunit alpha (723 aa).

Residues 1 to 189 form an enoyl-CoA hydratase/isomerase region; it reads MIYQAETLQV…KIGLLDAVVD (189 aa). Aspartate 296 serves as a coordination point for substrate. Residues 311 to 723 form a 3-hydroxyacyl-CoA dehydrogenase region; that stretch reads NKETQRAAVL…FYGAQQQGSI (413 aa). Residues methionine 325, aspartate 344, 401 to 403, lysine 408, and serine 430 contribute to the NAD(+) site; that span reads VVE. Histidine 451 serves as the catalytic For 3-hydroxyacyl-CoA dehydrogenase activity. An NAD(+)-binding site is contributed by asparagine 454. Residues asparagine 501 and tyrosine 661 each coordinate substrate.

In the N-terminal section; belongs to the enoyl-CoA hydratase/isomerase family. It in the C-terminal section; belongs to the 3-hydroxyacyl-CoA dehydrogenase family. As to quaternary structure, heterotetramer of two alpha chains (FadB) and two beta chains (FadA).

The catalysed reaction is a (3S)-3-hydroxyacyl-CoA + NAD(+) = a 3-oxoacyl-CoA + NADH + H(+). It carries out the reaction a (3S)-3-hydroxyacyl-CoA = a (2E)-enoyl-CoA + H2O. It catalyses the reaction a 4-saturated-(3S)-3-hydroxyacyl-CoA = a (3E)-enoyl-CoA + H2O. The enzyme catalyses (3S)-3-hydroxybutanoyl-CoA = (3R)-3-hydroxybutanoyl-CoA. The catalysed reaction is a (3Z)-enoyl-CoA = a 4-saturated (2E)-enoyl-CoA. It carries out the reaction a (3E)-enoyl-CoA = a 4-saturated (2E)-enoyl-CoA. It participates in lipid metabolism; fatty acid beta-oxidation. Its function is as follows. Involved in the aerobic and anaerobic degradation of long-chain fatty acids via beta-oxidation cycle. Catalyzes the formation of 3-oxoacyl-CoA from enoyl-CoA via L-3-hydroxyacyl-CoA. It can also use D-3-hydroxyacyl-CoA and cis-3-enoyl-CoA as substrate. This Vibrio vulnificus (strain CMCP6) protein is Fatty acid oxidation complex subunit alpha.